The sequence spans 245 residues: 1-(5-phosphoribosyl)-5-[(5-phosphoribosylamino)methylideneamino] imidazole-4-carboxamide isomerase (245 aa).

Aspartate 7 serves as the catalytic Proton acceptor. The Proton donor role is filled by aspartate 129.

Belongs to the HisA/HisF family.

Its subcellular location is the cytoplasm. The enzyme catalyses 1-(5-phospho-beta-D-ribosyl)-5-[(5-phospho-beta-D-ribosylamino)methylideneamino]imidazole-4-carboxamide = 5-[(5-phospho-1-deoxy-D-ribulos-1-ylimino)methylamino]-1-(5-phospho-beta-D-ribosyl)imidazole-4-carboxamide. It participates in amino-acid biosynthesis; L-histidine biosynthesis; L-histidine from 5-phospho-alpha-D-ribose 1-diphosphate: step 4/9. This is 1-(5-phosphoribosyl)-5-[(5-phosphoribosylamino)methylideneamino] imidazole-4-carboxamide isomerase from Shewanella oneidensis (strain ATCC 700550 / JCM 31522 / CIP 106686 / LMG 19005 / NCIMB 14063 / MR-1).